A 428-amino-acid chain; its full sequence is tRNA(Ile)-lysidine synthase (428 aa).

28–33 (SGGVDS) is a binding site for ATP.

The protein belongs to the tRNA(Ile)-lysidine synthase family.

It localises to the cytoplasm. The catalysed reaction is cytidine(34) in tRNA(Ile2) + L-lysine + ATP = lysidine(34) in tRNA(Ile2) + AMP + diphosphate + H(+). Functionally, ligates lysine onto the cytidine present at position 34 of the AUA codon-specific tRNA(Ile) that contains the anticodon CAU, in an ATP-dependent manner. Cytidine is converted to lysidine, thus changing the amino acid specificity of the tRNA from methionine to isoleucine. The protein is tRNA(Ile)-lysidine synthase of Streptococcus pyogenes serotype M18 (strain MGAS8232).